A 90-amino-acid chain; its full sequence is Small ribosomal subunit protein bS20 (90 aa).

Residues 1–11 (MANIKSSEKDI) are compositionally biased toward basic and acidic residues. Residues 1-29 (MANIKSSEKDIRRTKRRNAANSQNRSRLR) are disordered.

The protein belongs to the bacterial ribosomal protein bS20 family.

Its function is as follows. Binds directly to 16S ribosomal RNA. In Leptospira borgpetersenii serovar Hardjo-bovis (strain JB197), this protein is Small ribosomal subunit protein bS20.